The chain runs to 687 residues: DNA ligase (687 aa).

NAD(+) is bound by residues 34–38, 83–84, and E117; these read DAEYD and SL. The active-site N6-AMP-lysine intermediate is K119. 4 residues coordinate NAD(+): R140, E182, K298, and K322. Residues C416, C419, C434, and C439 each coordinate Zn(2+). Residues 609 to 687 form the BRCT domain; it reads EARGPFAGKT…EEEFVRLLKE (79 aa).

The protein belongs to the NAD-dependent DNA ligase family. LigA subfamily. The cofactor is Mg(2+). Mn(2+) serves as cofactor.

It catalyses the reaction NAD(+) + (deoxyribonucleotide)n-3'-hydroxyl + 5'-phospho-(deoxyribonucleotide)m = (deoxyribonucleotide)n+m + AMP + beta-nicotinamide D-nucleotide.. DNA ligase that catalyzes the formation of phosphodiester linkages between 5'-phosphoryl and 3'-hydroxyl groups in double-stranded DNA using NAD as a coenzyme and as the energy source for the reaction. It is essential for DNA replication and repair of damaged DNA. The protein is DNA ligase of Anaeromyxobacter dehalogenans (strain 2CP-C).